The sequence spans 205 residues: MSKKKGLSAEEKRTRMMEIFYETKDVFQLKDMEKIAPKEKGITTMSVKEVLQSLVDDGMVDCERIGTSNYYWAFPSKALHARKRKLEVLDSQLSEGNQKYANLQKSIEKAKVGRHETEERTMLAKELSSLRDQREQLKAEVEKYRECDPQVVEEIRQANQVAKEAANRWTDNIFAIKSWAKRKFGFEENKIDKNFGIPEDFDYID.

Ser-2 is modified (N-acetylserine). Residues 83-173 are a coiled coil; sequence KRKLEVLDSQ…EAANRWTDNI (91 aa).

Belongs to the MND1 family. In terms of assembly, heterodimer with PSMC3IP/HOP2. MND1-PSMC3IP interacts with DMC1 and RAD51 and binds preferentially to dsDNA.

The protein localises to the nucleus. In terms of biological role, required for proper homologous chromosome pairing and efficient cross-over and intragenic recombination during meiosis. Stimulates both DMC1- and RAD51-mediated homologous strand assimilation, which is required for the resolution of meiotic double-strand breaks. This is Meiotic nuclear division protein 1 homolog from Bos taurus (Bovine).